Reading from the N-terminus, the 559-residue chain is NXPE family member 3 (559 aa).

An N-terminal signal peptide occupies residues 1–30 (MWTNFFKLRLFCCLLAVLMVVVLVVNVTQV). N-linked (GlcNAc...) asparagine glycans are attached at residues N26, N237, and N346.

This sequence belongs to the NXPE family.

The protein resides in the secreted. In Pongo abelii (Sumatran orangutan), this protein is NXPE family member 3 (NXPE3).